A 283-amino-acid chain; its full sequence is MKILSIQSAVAYGHVGNSAAVFPLQRIGVEVLPVYTVNFSNHTGYGAWRGPLIAPDEVREVITGIEERRVLGSIDAVLSGYQGSEGIGDVIVDAVARVKAADPHAVYACDPVMGNAASGCFVAPAIPDLLRDRVVPVADLITPNQFELGYLTGSTPDTLESTLASVEAARAMGPSTVLVTSVERPDRPEGTIEMLAVDDTGAWIVQTPRLPMKANGSGDVTAALFTAHYVRTGEAETALRKTVSSVYDLLASTLESGERELRLVESQEFYANPREQFAVSRVG.

Ser8 provides a ligand contact to substrate. ATP contacts are provided by Asp110 and Glu147. Residue Asp219 coordinates substrate.

The protein belongs to the pyridoxine kinase family. PdxY subfamily. As to quaternary structure, homodimer. The cofactor is Mg(2+).

It catalyses the reaction pyridoxal + ATP = pyridoxal 5'-phosphate + ADP + H(+). It functions in the pathway cofactor metabolism; pyridoxal 5'-phosphate salvage; pyridoxal 5'-phosphate from pyridoxal: step 1/1. In terms of biological role, pyridoxal kinase involved in the salvage pathway of pyridoxal 5'-phosphate (PLP). Catalyzes the phosphorylation of pyridoxal to PLP. The chain is Pyridoxal kinase PdxY from Leifsonia xyli subsp. xyli (strain CTCB07).